A 1108-amino-acid polypeptide reads, in one-letter code: Ubiquitin carboxyl-terminal hydrolase 5 (1108 aa).

The 133-residue stretch at 55–187 folds into the MATH domain; that stretch reads FQRFTWHIKS…DGALLLTAYV (133 aa). Residues C120 and C222 each act as nucleophile in the active site. The 316-residue stretch at 213–528 folds into the USP domain; sequence VGLKNQGATC…SAYMLLYLRK (316 aa). The active-site Proton acceptor is H464.

The protein belongs to the peptidase C19 family.

The protein localises to the nucleus. It catalyses the reaction Thiol-dependent hydrolysis of ester, thioester, amide, peptide and isopeptide bonds formed by the C-terminal Gly of ubiquitin (a 76-residue protein attached to proteins as an intracellular targeting signal).. In terms of biological role, hydrolase that deubiquitinates target proteins. Cleaves the UBL propeptide in sde2. This Schizosaccharomyces pombe (strain 972 / ATCC 24843) (Fission yeast) protein is Ubiquitin carboxyl-terminal hydrolase 5 (ubp5).